Here is a 116-residue protein sequence, read N- to C-terminus: Large ribosomal subunit protein eL18 (116 aa).

This sequence belongs to the eukaryotic ribosomal protein eL18 family. As to quaternary structure, part of the 50S ribosomal subunit. Interacts weakly with proteins L4 and L15. Has been cross-linked to L4.

Its function is as follows. Stabilizes the tertiary rRNA structure within the 23S rRNA domain (domain II) to which it binds. The protein is Large ribosomal subunit protein eL18 (rpl18e) of Haloarcula marismortui (strain ATCC 43049 / DSM 3752 / JCM 8966 / VKM B-1809) (Halobacterium marismortui).